The following is a 531-amino-acid chain: Multidrug resistance protein fnx1 (531 aa).

The Cytoplasmic segment spans residues 1–30 (MVDQVNLATEQTSLLYPEVSRKKEELSVNK). Residues 31–51 (WTILPALWVGGFLSALDMTIV) traverse the membrane as a helical segment. Residues 52-225 (ASLYPVIGSE…NASLLSRIDY (174 aa)) are Lumenal-facing. The chain crosses the membrane as a helical span at residues 226–246 (LGSFLLVTGITALVVTFNMGG). Residues 247 to 252 (DAFPWV) are Cytoplasmic-facing. The helical transmembrane segment at 253–273 (SPVIITLLVSSVLILFAFYWV) threads the bilayer. At 274–297 (EKNIAVEPIAPVEILSQPTPLNVC) the chain is on the lumenal side. A helical membrane pass occupies residues 298 to 318 (LGNFFNAFCSFVIVYELPLFF). The Cytoplasmic segment spans residues 319 to 360 (ETTLLMPSSEAGVRIFPYVISTSVGSLCSGLYMKKTGRYRNL). A helical membrane pass occupies residues 361–381 (VIAGFFFMLMGIVSFAVLTSF). The Lumenal portion of the chain corresponds to 382 to 385 (GHRT). A helical transmembrane segment spans residues 386–406 (PLILISLCLAMTGCSYGMNLT). Over 407–496 (STLIAIISSL…QKLVIKSYAT (90 aa)) the chain is Cytoplasmic. Residues 497–517 (AFTWTFALVAIIAFAGFWCSL) form a helical membrane-spanning segment. Residues 518–531 (RIKQFYLHTSVDRS) lie on the Lumenal side of the membrane.

Belongs to the major facilitator superfamily.

Its subcellular location is the vacuole membrane. In terms of biological role, efflux transporter. Confers resistance to a variety of toxic compounds. This Schizosaccharomyces pombe (strain 972 / ATCC 24843) (Fission yeast) protein is Multidrug resistance protein fnx1 (fnx1).